The chain runs to 270 residues: Ribonuclease HII (270 aa).

The region spanning 28–222 (RQVAGADEAG…VSGRQGAPPR (195 aa)) is the RNase H type-2 domain. Residues D34, E35, and D128 each contribute to the a divalent metal cation site.

This sequence belongs to the RNase HII family. The cofactor is Mn(2+). Mg(2+) is required as a cofactor.

It is found in the cytoplasm. The catalysed reaction is Endonucleolytic cleavage to 5'-phosphomonoester.. Endonuclease that specifically degrades the RNA of RNA-DNA hybrids. This Salinispora tropica (strain ATCC BAA-916 / DSM 44818 / JCM 13857 / NBRC 105044 / CNB-440) protein is Ribonuclease HII.